The primary structure comprises 452 residues: Tubulin alpha-2/alpha-4 chain (452 aa).

GTP is bound at residue Gln-11. Lys-40 bears the N6-acetyllysine mark. The GTP site is built by Glu-71, Ser-140, Gly-144, Thr-145, Thr-179, Asn-206, and Asn-228. Residue Glu-71 coordinates Mg(2+). Glu-254 is a catalytic residue. The interval 432–452 (YEEVGVDSVEGEGEEEGGEEY) is disordered.

This sequence belongs to the tubulin family. In terms of assembly, dimer of alpha and beta chains. A typical microtubule is a hollow water-filled tube with an outer diameter of 25 nm and an inner diameter of 15 nM. Alpha-beta heterodimers associate head-to-tail to form protofilaments running lengthwise along the microtubule wall with the beta-tubulin subunit facing the microtubule plus end conferring a structural polarity. Microtubules usually have 13 protofilaments but different protofilament numbers can be found in some organisms and specialized cells. Mg(2+) is required as a cofactor. In terms of processing, undergoes a tyrosination/detyrosination cycle, the cyclic removal and re-addition of a C-terminal tyrosine residue by the enzymes tubulin tyrosine carboxypeptidase (TTCP) and tubulin tyrosine ligase (TTL), respectively. Acetylation of alpha chains at Lys-40 stabilizes microtubules and affects affinity and processivity of microtubule motors. This modification has a role in multiple cellular functions, ranging from cell motility, cell cycle progression or cell differentiation to intracellular trafficking and signaling.

Its subcellular location is the cytoplasm. The protein resides in the cytoskeleton. It carries out the reaction GTP + H2O = GDP + phosphate + H(+). Tubulin is the major constituent of microtubules, a cylinder consisting of laterally associated linear protofilaments composed of alpha- and beta-tubulin heterodimers. Microtubules grow by the addition of GTP-tubulin dimers to the microtubule end, where a stabilizing cap forms. Below the cap, tubulin dimers are in GDP-bound state, owing to GTPase activity of alpha-tubulin. This Patella vulgata (Common limpet) protein is Tubulin alpha-2/alpha-4 chain (TUB2).